We begin with the raw amino-acid sequence, 252 residues long: Imidazole glycerol phosphate synthase subunit HisF (252 aa).

Residues D11 and D130 contribute to the active site.

The protein belongs to the HisA/HisF family. In terms of assembly, heterodimer of HisH and HisF.

Its subcellular location is the cytoplasm. It catalyses the reaction 5-[(5-phospho-1-deoxy-D-ribulos-1-ylimino)methylamino]-1-(5-phospho-beta-D-ribosyl)imidazole-4-carboxamide + L-glutamine = D-erythro-1-(imidazol-4-yl)glycerol 3-phosphate + 5-amino-1-(5-phospho-beta-D-ribosyl)imidazole-4-carboxamide + L-glutamate + H(+). It participates in amino-acid biosynthesis; L-histidine biosynthesis; L-histidine from 5-phospho-alpha-D-ribose 1-diphosphate: step 5/9. Its function is as follows. IGPS catalyzes the conversion of PRFAR and glutamine to IGP, AICAR and glutamate. The HisF subunit catalyzes the cyclization activity that produces IGP and AICAR from PRFAR using the ammonia provided by the HisH subunit. This is Imidazole glycerol phosphate synthase subunit HisF from Bacillus cereus (strain AH820).